Reading from the N-terminus, the 256-residue chain is Type III pantothenate kinase (256 aa).

ATP is bound at residue aspartate 6 to tyrosine 13. Substrate contacts are provided by residues tyrosine 99 and glycine 106–arginine 109. Aspartate 108 functions as the Proton acceptor in the catalytic mechanism. Aspartate 129 serves as a coordination point for K(+). Threonine 132 serves as a coordination point for ATP. Position 184 (threonine 184) interacts with substrate.

The protein belongs to the type III pantothenate kinase family. Homodimer. The cofactor is NH4(+). Requires K(+) as cofactor.

The protein resides in the cytoplasm. The enzyme catalyses (R)-pantothenate + ATP = (R)-4'-phosphopantothenate + ADP + H(+). Its pathway is cofactor biosynthesis; coenzyme A biosynthesis; CoA from (R)-pantothenate: step 1/5. Functionally, catalyzes the phosphorylation of pantothenate (Pan), the first step in CoA biosynthesis. The protein is Type III pantothenate kinase of Legionella pneumophila (strain Paris).